Here is a 62-residue protein sequence, read N- to C-terminus: DGYIKGNKGCKVSCVINNVFCNSMCKSSGGSYGYCWSWGLACWCEGLPAAKKWLYAATNTCG.

Positions 1–62 constitute an LCN-type CS-alpha/beta domain; sequence DGYIKGNKGC…WLYAATNTCG (62 aa). Cystine bridges form between cysteine 10–cysteine 61, cysteine 14–cysteine 35, cysteine 21–cysteine 42, and cysteine 25–cysteine 44.

It belongs to the long (4 C-C) scorpion toxin superfamily. Sodium channel inhibitor family. Beta subfamily. Expressed by the venom gland.

The protein localises to the secreted. Depressant insect beta-toxins cause a transient contraction paralysis followed by a slow flaccid paralysis. They bind voltage-independently at site-4 of sodium channels (Nav) and shift the voltage of activation toward more negative potentials thereby affecting sodium channel activation and promoting spontaneous and repetitive firing. This toxin is active only on insects. This chain is Insect toxin BsIT4, found in Hottentotta tamulus sindicus (Scorpion).